Reading from the N-terminus, the 904-residue chain is Pentatricopeptide repeat-containing protein At4g30825, chloroplastic (904 aa).

Residues 1-61 (MGSLRFSIPL…SSTRVLDKIR (61 aa)) constitute a chloroplast transit peptide. Residues 75–94 (NSASAAPVERSRSSKLSGDQ) form a disordered region. 20 PPR repeats span residues 173–203 (NFVAYSLILRVLGRREEWDRAEDLIKELCGF), 209–243 (SYQVFNTVIYACTKKGNVKLASKWFHMMLEFGVRP), 244–274 (NVATIGMLMGLYQKNWNVEEAEFAFSHMRKF), 278–312 (CESAYSSMITIYTRLRLYDKAEEVIDLMKQDRVRL), 313–347 (KLENWLVMLNAYSQQGKMELAESILVSMEAAGFSP), 348–382 (NIIAYNTLITGYGKIFKMEAAQGLFHRLCNIGLEP), 383–417 (DETSYRSMIEGWGRADNYEEAKHYYQELKRCGYKP), 418–452 (NSFNLFTLINLQAKYGDRDGAIKTIEDMTGIGCQY), 487–521 (NQTSFSSLVMAYVKHGMVDDCLGLLREKKWRDSAF), 522–553 (ESHLYHLLICSCKESGQLTDAVKIYNHKMESD), 557–591 (NLHITSTMIDIYTVMGEFSEAEKLYLNLKSSGVVL), 592–622 (DRIGFSIVVRMYVKAGSLEEACSVLEIMDEQ), 628–662 (DVYLFRDMLRIYQKCDLQDKLQHLYYRIRKSGIHW), 663–697 (NQEMYNCVINCCARALPLDELSGTFEEMIRYGFTP), 698–732 (NTVTFNVLLDVYGKAKLFKKVNELFLLAKRHGVVD), 733–766 (VISYNTIIAAYGKNKDYTNMSSAIKNMQFDGFSV), 767–801 (SLEAYNTLLDAYGKDKQMEKFRSILKRMKKSTSGP), 802–836 (DHYTYNIMINIYGEQGWIDEVADVLKELKESGLGP), 837–871 (DLCSYNTLIKAYGIGGMVEEAVGLVKEMRGRNIIP), and 872–904 (DKVTYTNLVTALRRNDEFLEAIKWSLWMKQMGI).

It belongs to the PPR family. P subfamily.

The protein resides in the plastid. The protein localises to the chloroplast. In Arabidopsis thaliana (Mouse-ear cress), this protein is Pentatricopeptide repeat-containing protein At4g30825, chloroplastic.